We begin with the raw amino-acid sequence, 448 residues long: Ribosomal protein uS12 methylthiotransferase RimO (448 aa).

The MTTase N-terminal domain maps to 6–116; it reads PKVGIVSLGC…VVEAVHAAIP (111 aa). Positions 15, 51, 80, 147, 151, and 154 each coordinate [4Fe-4S] cluster. The region spanning 133–371 is the Radical SAM core domain; the sequence is LTPHHYAYLK…EAARQIADER (239 aa). The TRAM domain maps to 373–439; the sequence is AAKEGTRIEV…DYDLWGDVVE (67 aa).

Belongs to the methylthiotransferase family. RimO subfamily. [4Fe-4S] cluster serves as cofactor.

The protein localises to the cytoplasm. The catalysed reaction is L-aspartate(89)-[ribosomal protein uS12]-hydrogen + (sulfur carrier)-SH + AH2 + 2 S-adenosyl-L-methionine = 3-methylsulfanyl-L-aspartate(89)-[ribosomal protein uS12]-hydrogen + (sulfur carrier)-H + 5'-deoxyadenosine + L-methionine + A + S-adenosyl-L-homocysteine + 2 H(+). Catalyzes the methylthiolation of an aspartic acid residue of ribosomal protein uS12. The sequence is that of Ribosomal protein uS12 methylthiotransferase RimO from Paramagnetospirillum magneticum (strain ATCC 700264 / AMB-1) (Magnetospirillum magneticum).